The sequence spans 93 residues: Pyrimidine/purine nucleoside phosphorylase (93 aa).

It belongs to the nucleoside phosphorylase PpnP family.

The enzyme catalyses a purine D-ribonucleoside + phosphate = a purine nucleobase + alpha-D-ribose 1-phosphate. It catalyses the reaction adenosine + phosphate = alpha-D-ribose 1-phosphate + adenine. The catalysed reaction is cytidine + phosphate = cytosine + alpha-D-ribose 1-phosphate. It carries out the reaction guanosine + phosphate = alpha-D-ribose 1-phosphate + guanine. The enzyme catalyses inosine + phosphate = alpha-D-ribose 1-phosphate + hypoxanthine. It catalyses the reaction thymidine + phosphate = 2-deoxy-alpha-D-ribose 1-phosphate + thymine. The catalysed reaction is uridine + phosphate = alpha-D-ribose 1-phosphate + uracil. It carries out the reaction xanthosine + phosphate = alpha-D-ribose 1-phosphate + xanthine. Its function is as follows. Catalyzes the phosphorolysis of diverse nucleosides, yielding D-ribose 1-phosphate and the respective free bases. Can use uridine, adenosine, guanosine, cytidine, thymidine, inosine and xanthosine as substrates. Also catalyzes the reverse reactions. The chain is Pyrimidine/purine nucleoside phosphorylase from Magnetococcus marinus (strain ATCC BAA-1437 / JCM 17883 / MC-1).